Consider the following 396-residue polypeptide: Ribosomal RNA large subunit methyltransferase I (396 aa).

One can recognise a PUA domain in the interval 2–81 (SVRLVLTKGR…ETIDIAFFTR (80 aa)).

The protein belongs to the methyltransferase superfamily. RlmI family.

The protein localises to the cytoplasm. It carries out the reaction cytidine(1962) in 23S rRNA + S-adenosyl-L-methionine = 5-methylcytidine(1962) in 23S rRNA + S-adenosyl-L-homocysteine + H(+). Specifically methylates the cytosine at position 1962 (m5C1962) of 23S rRNA. This chain is Ribosomal RNA large subunit methyltransferase I, found in Enterobacter sp. (strain 638).